The sequence spans 808 residues: N-terminal kinase-like protein (808 aa).

Residues 14–314 (FELIPEPPEG…PEDFCRHKVL (301 aa)) form the Protein kinase domain. 3 HEAT repeats span residues 350–388 (IIPV…VNTQ), 389–427 (IFPH…LNVE), and 507–545 (ILPV…EDPT). Disordered stretches follow at residues 540–566 (VSED…GGAA), 587–646 (SHPT…RWDD), and 658–808 (SVLA…RKLD). Residues 556-566 (AASSPGMGGAA) are compositionally biased toward low complexity. Residues 587 to 600 (SHPTTAPTETNIPQ) are compositionally biased toward polar residues. Pro residues predominate over residues 601 to 617 (RPTPEGVPAPAPTPVPA). A compositionally biased stretch (polar residues) spans 660–680 (LAQQDDWSTGGQVSRASQVSN). The segment covering 681-690 (SDHKSSKSPE) has biased composition (basic and acidic residues). At Ser-754 the chain carries Phosphoserine. The segment covering 755–764 (WGEDNWEGLE) has biased composition (acidic residues). Residues 761–797 (EGLETDSRQVKAELARKKREERRREMEAKRAERKVAK) adopt a coiled-coil conformation. Composition is skewed to basic and acidic residues over residues 765–775 (TDSRQVKAELA) and 782–795 (RRRE…ERKV). The tract at residues 793-808 (RKVAKGPMKLGARKLD) is interaction with COPB1.

Belongs to the protein kinase superfamily. In terms of assembly, interacts with GORAB. Interacts with COPA, COPB1 and COPB2. Homooligomer. Interacts with AP2B1. In terms of tissue distribution, ubiquitous.

The protein localises to the cytoplasm. Its subcellular location is the cytoskeleton. It localises to the microtubule organizing center. It is found in the centrosome. The protein resides in the endoplasmic reticulum-Golgi intermediate compartment. The protein localises to the golgi apparatus. Its subcellular location is the cis-Golgi network. It localises to the nucleus. In terms of biological role, regulates COPI-mediated retrograde protein traffic at the interface between the Golgi apparatus and the endoplasmic reticulum. Involved in the maintenance of the Golgi apparatus morphology. Acts as a transcriptional activator. It binds to three different types of GC-rich DNA binding sites (box-A, -B and -C) in the beta-polymerase promoter region. It also binds to the TERT promoter region. The polypeptide is N-terminal kinase-like protein (SCYL1) (Homo sapiens (Human)).